Here is a 207-residue protein sequence, read N- to C-terminus: Small ribosomal subunit protein uS4 (207 aa).

Residues 31-55 are disordered; sequence KCKLDSKPGQHGRTSGARTSDYGTQ. A compositionally biased stretch (polar residues) spans 42–53; that stretch reads GRTSGARTSDYG. The region spanning 97 to 160 is the S4 RNA-binding domain; that stretch reads SRLDNVVYRM…KKQARIVEAL (64 aa).

Belongs to the universal ribosomal protein uS4 family. Part of the 30S ribosomal subunit. Contacts protein S5. The interaction surface between S4 and S5 is involved in control of translational fidelity.

In terms of biological role, one of the primary rRNA binding proteins, it binds directly to 16S rRNA where it nucleates assembly of the body of the 30S subunit. Functionally, with S5 and S12 plays an important role in translational accuracy. The protein is Small ribosomal subunit protein uS4 of Burkholderia orbicola (strain MC0-3).